The primary structure comprises 546 residues: MVGEEKMSLRNRLSKSGENPEQDEAQRSVSDTQSNGRITMKQLIAKKRQLAAEAEELKPLFLKEVGCHFDDFVTNLIEKSASLDNGGCALTTFSILEEMKNNHRAKDLRAPPEKGKIFISRRSLLDELFEVDHIRTIYHMFIGLLILFILSTLVVDYIDEGRLVLEFNLLGYAFGKLPTVIWTWWAMFLSTLSIPYFLFQRWAHGYSKTSHPLIYSLSHGFFFLVFQLGILGFVPTYVVLAYTLPPASRFIVILEQIRMVMKAHSFVRENVPRVLNAAKEKSSTVPVPTVNQYLYFLFAPTLIYRDSYPRTPTVRWGYVAVQFLQVFGCLFYVYYIFERLCAPLFRNIKQEPFSARVLVLCVFNSILPGVLMLFLTFFAFLHCWLNAFAEMLRFGDRMFYKDWWNSTSYSNYYRTWNVVVHDWLYYYAYKDLLWFFSKRFKSAAMLAVFALSAVVHEYALAVCLSYFYPVLFVLFMFFGMAFNFIVNDSRKRPIWNIMVWASLFLGHGVILCFYSQEWYARQHCPLKNPTFLDYVRPRSWTCQYVF.

Residue Met-1 is modified to N-acetylmethionine. Residues 1-37 (MVGEEKMSLRNRLSKSGENPEQDEAQRSVSDTQSNGR) form a disordered region. The Cytoplasmic segment spans residues 1–134 (MVGEEKMSLR…LDELFEVDHI (134 aa)). At Ser-8 the chain carries Phosphoserine. Residues 27–37 (RSVSDTQSNGR) are compositionally biased toward polar residues. His-133 contributes to the cholesterol binding site. The helical transmembrane segment at 135-156 (RTIYHMFIGLLILFILSTLVVD) threads the bilayer. At 157-176 (YIDEGRLVLEFNLLGYAFGK) the chain is on the lumenal side. The chain crosses the membrane as a helical span at residues 177–202 (LPTVIWTWWAMFLSTLSIPYFLFQRW). Over 203–214 (AHGYSKTSHPLI) the chain is Cytoplasmic. Residues 215–240 (YSLSHGFFFLVFQLGILGFVPTYVVL) form a helical membrane-spanning segment. The Lumenal portion of the chain corresponds to 241-248 (AYTLPPAS). A helical transmembrane segment spans residues 249–272 (RFIVILEQIRMVMKAHSFVRENVP). The Cytoplasmic segment spans residues 273–315 (RVLNAAKEKSSTVPVPTVNQYLYFLFAPTLIYRDSYPRTPTVR). Residues 316 to 348 (WGYVAVQFLQVFGCLFYVYYIFERLCAPLFRNI) form a helical membrane-spanning segment. Residues 349-365 (KQEPFSARVLVLCVFNS) lie on the Lumenal side of the membrane. The chain crosses the membrane as a helical span at residues 366–391 (ILPGVLMLFLTFFAFLHCWLNAFAEM). The Cytoplasmic segment spans residues 392-439 (LRFGDRMFYKDWWNSTSYSNYYRTWNVVVHDWLYYYAYKDLLWFFSKR). An FYXDWWN motif motif is present at residues 399–405 (FYKDWWN). Asn-411, Arg-414, Asn-417, His-421, Tyr-429, Lys-441, and Ser-452 together coordinate an acyl-CoA. A helical transmembrane segment spans residues 440-464 (FKSAAMLAVFALSAVVHEYALAVCL). His-456 is an active-site residue. Residues 465 to 470 (SYFYPV) lie on the Lumenal side of the membrane. Residues 471–486 (LFVLFMFFGMAFNFIV) traverse the membrane as a helical segment. Residues 487–492 (NDSRKR) are Cytoplasmic-facing. The helical transmembrane segment at 493-524 (PIWNIMVWASLFLGHGVILCFYSQEWYARQHC) threads the bilayer. Cysteines 524 and 542 form a disulfide. Residues 525–546 (PLKNPTFLDYVRPRSWTCQYVF) lie on the Lumenal side of the membrane.

This sequence belongs to the membrane-bound acyltransferase family. Sterol o-acyltransferase subfamily. In terms of assembly, may form homo- or heterodimers. Interacts with UBIAD1.

It localises to the endoplasmic reticulum membrane. The catalysed reaction is a sterol + a long-chain fatty acyl-CoA = a long-chain 3-hydroxysterol ester + CoA. It catalyses the reaction cholesterol + an acyl-CoA = a cholesterol ester + CoA. It carries out the reaction cholesterol + (9Z)-octadecenoyl-CoA = cholesteryl (9Z-octadecenoate) + CoA. The enzyme catalyses cholesterol + hexadecanoyl-CoA = cholesteryl hexadecanoate + CoA. The catalysed reaction is octadecanoyl-CoA + cholesterol = cholesteryl octadecanoate + CoA. It catalyses the reaction (9Z,12Z)-octadecadienoyl-CoA + cholesterol = cholesteryl (9Z,12Z)-octadecadienoate + CoA. It carries out the reaction (5Z,8Z,11Z,14Z)-eicosatetraenoyl-CoA + cholesterol = cholesteryl (5Z,8Z,11Z,14Z)-eicosatetraenoate + CoA. The enzyme catalyses (9Z)-hexadecenoyl-CoA + cholesterol = cholesteryl (9Z)-hexadecenoate + CoA. The catalysed reaction is (11Z)-octadecenoyl-CoA + cholesterol = cholesteryl (11Z)-octadecenoate + CoA. It catalyses the reaction (7Z)-octadecenoyl-CoA + cholesterol = cholesteryl (7Z)-octadecenoate + CoA. Functionally, catalyzes the formation of fatty acid-cholesterol esters, which are less soluble in membranes than cholesterol. Plays a role in lipoprotein assembly and dietary cholesterol absorption. Preferentially utilizes oleoyl-CoA ((9Z)-octadecenoyl-CoA) as a substrate: shows a higher activity towards an acyl-CoA substrate with a double bond at the delta-9 position (9Z) than towards saturated acyl-CoA or an unsaturated acyl-CoA with a double bond at the delta-7 (7Z) or delta-11 (11Z) positions. The polypeptide is Sterol O-acyltransferase 1 (SOAT1) (Cricetulus griseus (Chinese hamster)).